The sequence spans 210 residues: Ribosomal RNA small subunit methyltransferase G (210 aa).

S-adenosyl-L-methionine contacts are provided by residues glycine 76, methionine 81, 127–128 (VE), and arginine 145.

This sequence belongs to the methyltransferase superfamily. RNA methyltransferase RsmG family.

It is found in the cytoplasm. The enzyme catalyses guanosine(527) in 16S rRNA + S-adenosyl-L-methionine = N(7)-methylguanosine(527) in 16S rRNA + S-adenosyl-L-homocysteine. Functionally, specifically methylates the N7 position of guanine in position 527 of 16S rRNA. The protein is Ribosomal RNA small subunit methyltransferase G of Acinetobacter baumannii (strain SDF).